The chain runs to 462 residues: ESX-1 secretion system protein EccE1 (462 aa).

Helical transmembrane passes span 9 to 29 and 34 to 54; these read FSTGHALLASALAPPCIIAFL and WWAGIALASLGVIVATVTFYG.

This sequence belongs to the EccE family. Part of the ESX-1 / type VII secretion system (T7SS), which is composed of cytosolic and membrane components. The ESX-1 membrane complex is composed of EccB1, EccCa1, EccCb1, EccD1 and EccE1.

The protein resides in the cell inner membrane. Functionally, part of the ESX-1 specialized secretion system, which delivers several virulence factors to host cells during infection, including the key virulence factors EsxA (ESAT-6) and EsxB (CFP-10). This chain is ESX-1 secretion system protein EccE1, found in Mycobacterium tuberculosis (strain CDC 1551 / Oshkosh).